Consider the following 200-residue polypeptide: Large ribosomal subunit protein uL18 (200 aa).

This sequence belongs to the universal ribosomal protein uL18 family. In terms of assembly, part of the 50S ribosomal subunit. Contacts the 5S and 23S rRNAs.

In terms of biological role, this is one of the proteins that bind and probably mediate the attachment of the 5S RNA into the large ribosomal subunit, where it forms part of the central protuberance. The chain is Large ribosomal subunit protein uL18 from Thermococcus sibiricus (strain DSM 12597 / MM 739).